A 547-amino-acid polypeptide reads, in one-letter code: MIFLEFAELCSRLEKISGRLETISILAETISSLSDDDLPHFCRLILGKPFPEWSGKKLGVGPNLLYEAVAYVTGRKREEVIDRLSRVGDAGAAVEELLSQKSQTSFFTVELTLADIMAALIEISGMEGGRSQKEKVRVIQRILSSASPLEGHYITAILLEDFRIGVGEGNLRDAIAQAFSVDPNLVEYANQVRNDMGEVAVLARKGEEALRSVRLVPFHPVRMMLARQGTISGVLKEGDPVAVEFKYDGARFQFHKQNKTCRMYSRRLEEVTNAMPDVVALLDEALPDDIIVDGEVIAVQGGHPMPFQTVLRRFRRKHNVAEAADAITMIPNLFDILYYNQEMLIDLPFRERRNILTQVASRYVTPQLVSDDETEIEAYYHTALDAGHEGVMLKLQGSRYTPGVRGKDWVKIKPEADTLDLVVTGAEWGEGKRAHVFGSFLLSVRDDDRLVPISRVATGFSDEQLIWLFDTLQDDIIRKDGKMVYFEPRLVFEIGYSEIQKSPNYEGGYALRFPRFIEVREDKDLKEANTAEDVEERYIQTHSSLNT.

Glu244 serves as a coordination point for ATP. Lys246 functions as the N6-AMP-lysine intermediate in the catalytic mechanism. Residues Arg251, Arg266, Glu295, Phe334, Arg405, and Lys411 each contribute to the ATP site.

The protein belongs to the ATP-dependent DNA ligase family. It depends on Mg(2+) as a cofactor.

The enzyme catalyses ATP + (deoxyribonucleotide)n-3'-hydroxyl + 5'-phospho-(deoxyribonucleotide)m = (deoxyribonucleotide)n+m + AMP + diphosphate.. In terms of biological role, DNA ligase that seals nicks in double-stranded DNA during DNA replication, DNA recombination and DNA repair. The protein is DNA ligase of Methanospirillum hungatei JF-1 (strain ATCC 27890 / DSM 864 / NBRC 100397 / JF-1).